The sequence spans 341 residues: Anthranilate phosphoribosyltransferase (341 aa).

Residues G84, 94–97 (NVST), 112–120 (KHGGRAASS), and S124 contribute to the 5-phospho-alpha-D-ribose 1-diphosphate site. G84 lines the anthranilate pocket. S96 contributes to the Mg(2+) binding site. R170 contributes to the anthranilate binding site. Residues D229 and E230 each coordinate Mg(2+).

Belongs to the anthranilate phosphoribosyltransferase family. In terms of assembly, homodimer. Mg(2+) serves as cofactor.

The catalysed reaction is N-(5-phospho-beta-D-ribosyl)anthranilate + diphosphate = 5-phospho-alpha-D-ribose 1-diphosphate + anthranilate. It participates in amino-acid biosynthesis; L-tryptophan biosynthesis; L-tryptophan from chorismate: step 2/5. Catalyzes the transfer of the phosphoribosyl group of 5-phosphorylribose-1-pyrophosphate (PRPP) to anthranilate to yield N-(5'-phosphoribosyl)-anthranilate (PRA). In Methylobacillus flagellatus (strain ATCC 51484 / DSM 6875 / VKM B-1610 / KT), this protein is Anthranilate phosphoribosyltransferase.